A 1264-amino-acid polypeptide reads, in one-letter code: Multifunctional 2-oxoglutarate metabolism enzyme (1264 aa).

Residues 1 to 41 (MSSSPSPFGQNEWLVEEMYRKFREDPSSVDPSWHEFLVDYN) form a 2-oxoglutarate dehydrogenase E1, N-terminal part region. Over residues 23–37 (REDPSSVDPSWHEFL) the composition is skewed to basic and acidic residues. The disordered stretch occupies residues 23–140 (REDPSSVDPS…AQPADDSDQN (118 aa)). The interval 42–102 (PEPTTDSSAS…SKPQAKAKPA (61 aa)) is linker. Positions 43-59 (EPTTDSSASENGQQTRT) are enriched in polar residues. Residues 63–73 (KAPPEPAPAPA) show a composition bias toward pro residues. The succinyltransferase E2 stretch occupies residues 103–373 (ESKSSTKPAD…LRTVHQLLLS (271 aa)). H352 serves as the catalytic Proton acceptor; for succinyltransferase activity. Residues 374–1264 (DDFFDEIFRE…QEILDEAFAP (891 aa)) are 2-oxoglutarate dehydrogenase E1, C-terminal part. R578 contributes to the thiamine diphosphate binding site. The 2-oxoglutarate site is built by H617 and S642. Residues S642, L644, D681, A682, A683, and N714 each contribute to the thiamine diphosphate site. Position 681 (D681) interacts with Mg(2+). Mg(2+)-binding residues include N714 and I716. Residues 819–850 (DISMKEAEDALRDYQGQLEQVFNEVRELEKHE) adopt a coiled-coil conformation. H1056 lines the 2-oxoglutarate pocket. The acetyl-CoA site is built by T1074, R1090, K1125, S1128, Q1178, R1185, and R1186.

The protein belongs to the 2-oxoacid dehydrogenase family. Kgd subfamily. Homodimer. The 2-oxoglutarate dehydrogenase (ODH) complex contains multiple copies of three enzymatic components: 2-oxoglutarate dehydrogenase (E1), dihydrolipoamide succinyltransferase (E2) and lipoamide dehydrogenase (E3). Requires Mg(2+) as cofactor. The cofactor is thiamine diphosphate.

The catalysed reaction is glyoxylate + 2-oxoglutarate + H(+) = 2-hydroxy-3-oxoadipate + CO2. It catalyses the reaction 2-oxoglutarate + H(+) = succinate semialdehyde + CO2. The enzyme catalyses N(6)-[(R)-lipoyl]-L-lysyl-[protein] + 2-oxoglutarate + H(+) = N(6)-[(R)-S(8)-succinyldihydrolipoyl]-L-lysyl-[protein] + CO2. It carries out the reaction N(6)-[(R)-dihydrolipoyl]-L-lysyl-[protein] + succinyl-CoA = N(6)-[(R)-S(8)-succinyldihydrolipoyl]-L-lysyl-[protein] + CoA. It functions in the pathway carbohydrate metabolism; tricarboxylic acid cycle; succinate from 2-oxoglutarate (transferase route): step 1/2. Its pathway is carbohydrate metabolism; tricarboxylic acid cycle; succinyl-CoA from 2-oxoglutarate (dehydrogenase route): step 1/1. With respect to regulation, alpha-ketoglutarate dehydrogenase and decarboxylase activities are inhibited by unphosphorylated GarA, and allosterically activated by acetyl-CoA, the main substrate of the TCA cycle. Shows three enzymatic activities that share a first common step, the attack of thiamine-PP on 2-oxoglutarate (alpha-ketoglutarate, KG), leading to the formation of an enamine-thiamine-PP intermediate upon decarboxylation. Thus, displays KGD activity, catalyzing the decarboxylation from five-carbon 2-oxoglutarate to four-carbon succinate semialdehyde (SSA). Also catalyzes C-C bond formation between the activated aldehyde formed after decarboxylation of alpha-ketoglutarate and the carbonyl of glyoxylate (GLX), to yield 2-hydroxy-3-oxoadipate (HOA), which spontaneously decarboxylates to form 5-hydroxylevulinate (HLA). And is also a component of the 2-oxoglutarate dehydrogenase (ODH) complex, that catalyzes the overall conversion of 2-oxoglutarate to succinyl-CoA and CO(2). The KG decarboxylase and KG dehydrogenase reactions provide two alternative, tightly regulated, pathways connecting the oxidative and reductive branches of the TCA cycle. This chain is Multifunctional 2-oxoglutarate metabolism enzyme (kgd), found in Mycobacterium sp. (strain JLS).